Here is a 432-residue protein sequence, read N- to C-terminus: Adenosylhomocysteinase (432 aa).

Ser-2 is subject to N-acetylserine. Substrate is bound by residues Thr-57, Asp-131, and Glu-156. Ser-183 is subject to Phosphoserine. Residues Ser-183 to Ala-350 form an NAD binding region. Residues Lys-186 and Asp-190 each coordinate substrate. Lys-186 carries the post-translational modification N6-(2-hydroxyisobutyryl)lysine. Tyr-193 carries the post-translational modification Phosphotyrosine.

Belongs to the adenosylhomocysteinase family. In terms of assembly, homotetramer. Interaction with AHCYL1. NAD(+) serves as cofactor.

It is found in the cytoplasm. Its subcellular location is the melanosome. The protein resides in the nucleus. The protein localises to the endoplasmic reticulum. It carries out the reaction S-adenosyl-L-homocysteine + H2O = L-homocysteine + adenosine. Its pathway is amino-acid biosynthesis; L-homocysteine biosynthesis; L-homocysteine from S-adenosyl-L-homocysteine: step 1/1. In terms of biological role, catalyzes the hydrolysis of S-adenosyl-L-homocysteine to form adenosine and homocysteine. Binds copper ions. The sequence is that of Adenosylhomocysteinase (AHCY) from Macaca fascicularis (Crab-eating macaque).